The following is a 204-amino-acid chain: Probable UbiX-like flavin prenyltransferase (204 aa).

FMN-binding positions include 21-23 (GAT), Ser-47, 98-101 (SMKS), and Arg-133.

It belongs to the UbiX/PAD1 family. YclB subfamily. As to quaternary structure, homododecamer.

The enzyme catalyses dimethylallyl phosphate + FMNH2 = prenylated FMNH2 + phosphate. In terms of biological role, involved in the non-oxidative decarboxylation and detoxification of phenolic derivatives under both aerobic and anaerobic conditions. Flavin prenyltransferase that catalyzes the synthesis of the prenylated FMN cofactor (prenyl-FMN) for phenolic acid decarboxylase. The sequence is that of Probable UbiX-like flavin prenyltransferase from Bacillus subtilis (strain 168).